The primary structure comprises 1203 residues: Kinesin-like protein KIN-14Q (1203 aa).

The disordered stretch occupies residues 1–28; it reads MEDCCDPLLATDASPRPESFSRSEKDIA. The segment covering 19-28 has biased composition (basic and acidic residues); that stretch reads SFSRSEKDIA. Residues 336-395 are a coiled coil; the sequence is ENLVCRAEEEAEGMRSDCEQQRKEMEDMKRMVEELKLENQQKTRECEEALNSLSEIQNEL. The Kinesin motor domain occupies 499–825; sequence NIRVFCRCRP…LNFASRVRGI (327 aa). 582-589 is an ATP binding site; the sequence is GQTGTGKT. Residues 846-901 are a coiled coil; the sequence is VEKWKQDMKGKDEQIRKMEETMYGLEAKIKERDTKNKTLQDKVKELESQLLVERKL. The tract at residues 907–931 is disordered; it reads DTKIAEQQTKQQTEDENNTSKRPPL.

The protein belongs to the TRAFAC class myosin-kinesin ATPase superfamily. Kinesin family. KIN-14 subfamily.

In Arabidopsis thaliana (Mouse-ear cress), this protein is Kinesin-like protein KIN-14Q.